The primary structure comprises 406 residues: Eukaryotic initiation factor 4A-I (406 aa).

The interval 1 to 21 (MSASQDSRSRDNGPDGMEPEG) is disordered. At serine 2 the chain carries N-acetylserine. Serine 4 carries the phosphoserine modification. Positions 32 to 60 (DSFDDMNLSESLLRGIYAYGFEKPSAIQQ) match the Q motif motif. In terms of domain architecture, Helicase ATP-binding spans 63–234 (ILPCIKGYDV…KKFMRDPIRI (172 aa)). 76 to 83 (AQSGTGKT) lines the ATP pocket. Lysine 118 bears the N6-acetyllysine mark. Lysine 146 participates in a covalent cross-link: Glycyl lysine isopeptide (Lys-Gly) (interchain with G-Cter in SUMO2). Threonine 158 carries the phosphothreonine modification. Lysine 174 bears the N6-acetyllysine mark. The DEAD box signature appears at 182–185 (DEAD). Position 193 is an N6-acetyllysine (lysine 193). Lysine 225 is covalently cross-linked (Glycyl lysine isopeptide (Lys-Gly) (interchain with G-Cter in SUMO2)). Lysine 238 bears the N6-acetyllysine; alternate mark. Lysine 238 is covalently cross-linked (Glycyl lysine isopeptide (Lys-Gly) (interchain with G-Cter in SUMO2); alternate). The Helicase C-terminal domain maps to 245–406 (GIRQFYINVE…EMPLNVADLI (162 aa)). Glycyl lysine isopeptide (Lys-Gly) (interchain with G-Cter in SUMO2) cross-links involve residues lysine 309, lysine 369, and lysine 381.

This sequence belongs to the DEAD box helicase family. eIF4A subfamily. In terms of assembly, eIF4F is a multi-subunit complex, the composition of which varies with external and internal environmental conditions. It is composed of at least EIF4A, EIF4E and EIF4G1/EIF4G3. Interacts with PAIP1, EIF4E and UPF2. Found in a complex with XPO7, EIF4A1, ARHGAP1, VPS26A, VPS29, VPS35 and SFN. May interact with NOM1. Interacts with PDCD4; this interferes with the interaction between EIF4A and EIF4G. Interacts with RBM4. Interacts with DDX3X in an RNA-independent manner. Interacts with PKP1 (via N-terminus); the interaction promotes EIF4A1 recruitment to the cap-dependent translation complex and EIF4A1 ATPase activity.

It is found in the cytoplasm. The protein localises to the perinuclear region. The protein resides in the cell membrane. Its subcellular location is the stress granule. The enzyme catalyses ATP + H2O = ADP + phosphate + H(+). In terms of biological role, ATP-dependent RNA helicase which is a subunit of the eIF4F complex involved in cap recognition and is required for mRNA binding to ribosome. In the current model of translation initiation, eIF4A unwinds RNA secondary structures in the 5'-UTR of mRNAs which is necessary to allow efficient binding of the small ribosomal subunit, and subsequent scanning for the initiator codon. As a result, promotes cell proliferation and growth. This is Eukaryotic initiation factor 4A-I (EIF4A1) from Macaca fascicularis (Crab-eating macaque).